We begin with the raw amino-acid sequence, 25 residues long: Caerin-2.4 (25 aa).

In terms of tissue distribution, expressed by the skin parotoid and/or rostral glands.

It is found in the secreted. In terms of biological role, antibacterial peptide, that adopts an alpha helical conformation which can disrupt bacterial membranes. Each caerin displays a different antimicrobial specificity. The chain is Caerin-2.4 from Ranoidea caerulea (Green tree frog).